A 72-amino-acid polypeptide reads, in one-letter code: Translation initiation factor IF-1 (72 aa).

Residues 1–72 (MSKEDSFEME…SKGRITYRAR (72 aa)) form the S1-like domain.

This sequence belongs to the IF-1 family. As to quaternary structure, component of the 30S ribosomal translation pre-initiation complex which assembles on the 30S ribosome in the order IF-2 and IF-3, IF-1 and N-formylmethionyl-tRNA(fMet); mRNA recruitment can occur at any time during PIC assembly.

Its subcellular location is the cytoplasm. Its function is as follows. One of the essential components for the initiation of protein synthesis. Stabilizes the binding of IF-2 and IF-3 on the 30S subunit to which N-formylmethionyl-tRNA(fMet) subsequently binds. Helps modulate mRNA selection, yielding the 30S pre-initiation complex (PIC). Upon addition of the 50S ribosomal subunit IF-1, IF-2 and IF-3 are released leaving the mature 70S translation initiation complex. This Pseudomonas savastanoi pv. phaseolicola (strain 1448A / Race 6) (Pseudomonas syringae pv. phaseolicola (strain 1448A / Race 6)) protein is Translation initiation factor IF-1.